We begin with the raw amino-acid sequence, 2031 residues long: Pericentriolar material 1 protein (2031 aa).

Disordered regions lie at residues 1 to 82 and 111 to 165; these read MATG…HTFP and DQRS…STRS. Residues 1-484 are self-association; it reads MATGGGPPDE…RSTEQRTLGS (484 aa). Over residues 42–58 the composition is skewed to basic and acidic residues; sequence RSAEKNKKKFVECDLRL. A compositionally biased stretch (polar residues) spans 114–130; the sequence is SIGSDSQGRATAANNKR. Residues 149 to 162 show a composition bias toward basic and acidic residues; sequence NKEKSKSPPKREAS. Positions 302-394 form a coiled coil; the sequence is RQEAKEELKN…FHNQLHDSED (93 aa). Residues 469–494 show a composition bias toward polar residues; it reads SSVSPRRSTEQRTLGSAVSSALTSDN. Positions 469 to 495 are disordered; sequence SSVSPRRSTEQRTLGSAVSSALTSDNR. The stretch at 523–549 forms a coiled coil; it reads AEKLKKLKEVRKRLNELRELVHYYEQT. Disordered regions lie at residues 550-590 and 649-678; these read SDMM…NPQY and KEEDGNRELDDEDAEDQGSRASLSSQNSVA. Positions 562 to 580 are enriched in acidic residues; sequence KDEDETEDSEYDSEQEDAE. Composition is skewed to polar residues over residues 581 to 590 and 667 to 677; these read PTTNIRNPQY and SRASLSSQNSV. The stretch at 684–711 forms a coiled coil; that stretch reads VDFEQKFNRLVAAKQKLKQLQDLVAMYG. The segment at 712–752 is disordered; sequence DDSESEPVAPERSFSGDQFPPEATTLKQQPNNTRPNVSKAQ. The span at 736–750 shows a compositional bias: polar residues; the sequence is TLKQQPNNTRPNVSK. The self-association and localization to centrosomes stretch occupies residues 745-1271; the sequence is RPNVSKAQKD…PACFGAGLSA (527 aa). The stretch at 757–805 forms a coiled coil; it reads LKEQAREKFYESKLQQQQRELSQLQEERKKLIEIQEKIQTLRKACPDLQ. Composition is skewed to polar residues over residues 806–823 and 888–898; these read LSTSSAGTNPANRQNRQM and QGNTETTSAAS. Disordered stretches follow at residues 806–835 and 882–1014; these read LSTSSAGTNPANRQNRQMTTTTSTPDVNTN and AEHQ…VSMR. Positions 858–892 form a coiled coil; it reads SEIRKHQILREDLRQRRKQLETLMAEHQRRQGNTE. The span at 930 to 945 shows a compositional bias: acidic residues; sequence LEEEEEEEEVDDEECL. Composition is skewed to polar residues over residues 960-981 and 1004-1013; these read NTSCENNSYPQNSIRKTSFNGR and KTRQQQNVSM. A coiled-coil region spans residues 1025–1049; sequence LSHVEEKEHWQEQIDQIKKQLDYST. Disordered stretches follow at residues 1123–1146, 1219–1247, 1318–1345, and 1514–1533; these read QHLQGESHQREDRGSSAPPLTSPN, KPFESHRSNSTEKERNPPKKPDESEQGRR, SAQASLASKDKTPKAKNKKRKVFHQKSK, and PVCQEGEQNDGDNISSLSTS. 2 stretches are compositionally biased toward basic and acidic residues: residues 1127-1136 and 1221-1247; these read GESHQREDRG and FESHRSNSTEKERNPPKKPDESEQGRR. Positions 1331–1345 are enriched in basic residues; the sequence is KAKNKKRKVFHQKSK. A compositionally biased stretch (polar residues) spans 1524–1533; that stretch reads GDNISSLSTS. Residues 1550-1599 adopt a coiled-coil conformation; the sequence is HFDQALARMREYERMKSETENGLVADCCNNLNAAASSLEGTNDEARGRAQ. Disordered stretches follow at residues 1746 to 1802, 1817 to 1870, 1922 to 1965, and 2007 to 2031; these read ADKE…DLDE, ALTN…EANI, NNVK…DEDD, and ENGADQLAGDPLALKEPDSPAIHPA. Positions 1771 to 1784 are enriched in basic and acidic residues; the sequence is KDETETAEENRNFD. A compositionally biased stretch (acidic residues) spans 1824 to 1835; it reads GEDENEDEENYE. 2 stretches are compositionally biased toward polar residues: residues 1843–1852 and 1922–1942; these read VQTSLETSSE and NNVKSPVDSPGTSGAGSSDTE.

The protein belongs to the PCM1 family. In terms of assembly, self-associates. Interacts with cetn3.

Its subcellular location is the cytoplasm. It is found in the cytoskeleton. It localises to the microtubule organizing center. The protein resides in the centrosome. The protein localises to the cytoplasmic granule. Its subcellular location is the centriolar satellite. It is found in the cilium basal body. In terms of biological role, required to anchor microtubules to the centrosome. Required for centrosome assembly and function. Essential for the correct localization of several centrosomal proteins including cetn3 and pcnt. Probably involved in the biogenesis of cilia. This is Pericentriolar material 1 protein (pcm1) from Xenopus laevis (African clawed frog).